Consider the following 248-residue polypeptide: MSTDKKNRTASHLMIWNELKWAPSEKQLAQFIHLQELLKEWNKKINLTRLVDGDDFWTAQVCDSLLPLYEELQHPEVSHKYIDIGSGCGFPGIAIAIAMPNSNITLLDSSSKKTTFLKEVSKEIGLDSRIKVVTERAEEAGRNPIFRSNFDYAIARAVASANVVAEYLVPFLNSTGQALIFKGSWSETEQQILKKALAELNAEIQRTHEFILPNNRGIRNIIRINSTNKCPHQYPRSIGKPKKQPLGY.

S-adenosyl-L-methionine is bound by residues Gly-85, Phe-90, 108-110 (DSS), 137-138 (AE), and Arg-156.

This sequence belongs to the methyltransferase superfamily. RNA methyltransferase RsmG family.

It is found in the cytoplasm. In terms of biological role, specifically methylates the N7 position of a guanine in 16S rRNA. In Prochlorococcus marinus (strain NATL2A), this protein is Ribosomal RNA small subunit methyltransferase G.